Reading from the N-terminus, the 479-residue chain is MTVTTSSPATAPGRTPGIGRVARVIGPVVDVEFAPDELPEIYQALQVDRTIGDETLTLTLEVAQHIGDNTVRAISMQQTDGLVRGAPVHDTGAPISVPVGDATKGHVFNVLGTPLDVKQIEAETYWPIHRSAPAFDQLESKTEMFTTGIKVIDLLAPYVRGGKIGLFGGAGVGKTVIIQEMIRRVAKEFGGVSVFAGVGERTREGNDLFLEMTEAGVIEDTALVFGQMDEPPGTRLRVALGALTMAEYFRDVQKQDVLLFIDNIFRFTQAGSEVSTLLGRMPSAVGYQPTLADEMGVLQERITSTRGHSITSLQAIYVPADDLTDPAPATTFTHLDATTVLDRAISDLGIYPAVSPLDSNSRILDARYLGQEHYDTAREVQRILQRYKDLQDIIAILGIDELSEEDKILVNRARRIQRFLSQPFFVAEQFTGIPGKFVPLDETIDSFKRLTQGDFDHLPEQAFFMCGGIEDAEKNAENL.

168-175 contributes to the ATP binding site; sequence GGAGVGKT.

The protein belongs to the ATPase alpha/beta chains family. F-type ATPases have 2 components, CF(1) - the catalytic core - and CF(0) - the membrane proton channel. CF(1) has five subunits: alpha(3), beta(3), gamma(1), delta(1), epsilon(1). CF(0) has three main subunits: a(1), b(2) and c(9-12). The alpha and beta chains form an alternating ring which encloses part of the gamma chain. CF(1) is attached to CF(0) by a central stalk formed by the gamma and epsilon chains, while a peripheral stalk is formed by the delta and b chains.

The protein resides in the cell membrane. The enzyme catalyses ATP + H2O + 4 H(+)(in) = ADP + phosphate + 5 H(+)(out). In terms of biological role, produces ATP from ADP in the presence of a proton gradient across the membrane. The catalytic sites are hosted primarily by the beta subunits. The protein is ATP synthase subunit beta of Frankia casuarinae (strain DSM 45818 / CECT 9043 / HFP020203 / CcI3).